A 129-amino-acid chain; its full sequence is MAYPANYRYTREHEWIEIDGKTGTVGITDYAQNSLGDIVFVESPKVGDKIEKGKVFGSVESVKAVSDLYAPVSGTVTAVNEELANAPEKINTDAHTAWIMKIELSDAAEAESLLDATAYEAFVKEETGH.

Positions 22-103 (TGTVGITDYA…AHTAWIMKIE (82 aa)) constitute a Lipoyl-binding domain. An N6-lipoyllysine modification is found at Lys63.

This sequence belongs to the GcvH family. The glycine cleavage system is composed of four proteins: P, T, L and H. The cofactor is (R)-lipoate.

In terms of biological role, the glycine cleavage system catalyzes the degradation of glycine. The H protein shuttles the methylamine group of glycine from the P protein to the T protein. In Acidobacterium capsulatum (strain ATCC 51196 / DSM 11244 / BCRC 80197 / JCM 7670 / NBRC 15755 / NCIMB 13165 / 161), this protein is Glycine cleavage system H protein.